A 489-amino-acid chain; its full sequence is Male-specific lethal 1-like 1 (489 aa).

Disordered stretches follow at residues 126 to 164 and 224 to 311; these read PMVS…VRKG and VKKD…EDMQ. Residues 179 to 227 adopt a coiled-coil conformation; it reads LLLQLELIEQQQKHLHNKNKEIEDLKAEKEMLMARIERMEHRLQMVKKD. The PEHE domain maps to 347–466; sequence TVEVPSWRES…LKQQDFDLPW (120 aa). The interaction with KAT8 HAT domain stretch occupies residues 371–389; it reads ECLDDSVFLKRHSKLELDE. The short motif at 380–394 is the Bipartite nuclear localization signal element; that stretch reads KRHSKLELDEKRRKR.

Belongs to the msl-1 family. As to quaternary structure, component of a multisubunit histone acetyltransferase complex (MSL). Interacts (via PEHE domain) with KAT8 (via HAT domain) and MSL3 (via MRG domain); both interactions are direct.

The protein localises to the nucleus. It localises to the nucleoplasm. Its subcellular location is the nucleus speckle. Functionally, component of histone acetyltransferase complex. Within MSL complex, promotes ubiquitination of histone H2B. In Danio rerio (Zebrafish), this protein is Male-specific lethal 1-like 1 (msl1l1).